The sequence spans 210 residues: Probable sporulation protein YtaF (210 aa).

The next 6 helical transmembrane spans lie at 6 to 26, 36 to 56, 69 to 89, 129 to 149, 162 to 184, and 190 to 210; these read ILLL…TYGL, ILVI…IGSF, LGGL…FKPA, VING…AFGA, VMSI…AGHF, and WIDK…LWKL.

The protein resides in the cell membrane. This chain is Probable sporulation protein YtaF (ytaF), found in Bacillus subtilis (strain 168).